The sequence spans 708 residues: Glycine--tRNA ligase beta subunit (708 aa).

It belongs to the class-II aminoacyl-tRNA synthetase family. As to quaternary structure, tetramer of two alpha and two beta subunits.

It is found in the cytoplasm. It catalyses the reaction tRNA(Gly) + glycine + ATP = glycyl-tRNA(Gly) + AMP + diphosphate. The sequence is that of Glycine--tRNA ligase beta subunit from Paracidovorax citrulli (strain AAC00-1) (Acidovorax citrulli).